A 276-amino-acid polypeptide reads, in one-letter code: Octanoyltransferase LipM (276 aa).

Residues 31-246 enclose the BPL/LPL catalytic domain; sequence GLIPPVIRFY…GFAKSLQIEL (216 aa). Residue cysteine 148 is the Acyl-thioester intermediate of the active site.

Belongs to the octanoyltransferase LipM family. In terms of assembly, monomer.

The enzyme catalyses octanoyl-[ACP] + L-lysyl-[protein] = N(6)-octanoyl-L-lysyl-[protein] + holo-[ACP] + H(+). The protein operates within protein modification; protein lipoylation via endogenous pathway; protein N(6)-(lipoyl)lysine from octanoyl-[acyl-carrier-protein]. Its function is as follows. Catalyzes the transfer of endogenously produced octanoic acid from octanoyl-acyl-carrier-protein onto the lipoyl domain of GcvH, an intermediate carrier during protein lipoylation. This is Octanoyltransferase LipM from Lysinibacillus sphaericus (strain C3-41).